The following is an 871-amino-acid chain: Zinc finger and BTB domain-containing protein 10 (871 aa).

Disordered stretches follow at residues methionine 1 to arginine 156 and glycine 177 to glycine 228. Residues arginine 14–serine 26 show a composition bias toward gly residues. Over residues threonine 27 to alanine 37 the composition is skewed to low complexity. Positions proline 39–glutamine 56 are enriched in pro residues. Residues glutamate 65–aspartate 76 show a composition bias toward acidic residues. Over residues leucine 77–proline 103 the composition is skewed to low complexity. Arginine 126 bears the Omega-N-methylarginine mark. Gly residues predominate over residues arginine 126–asparagine 135. Position 210 is a phosphoserine (serine 210). Lysine 245 participates in a covalent cross-link: Glycyl lysine isopeptide (Lys-Gly) (interchain with G-Cter in SUMO2). A BTB domain is found at cysteine 364 to serine 433. Residues lysine 468, lysine 483, and lysine 497 each participate in a glycyl lysine isopeptide (Lys-Gly) (interchain with G-Cter in SUMO2) cross-link. The residue at position 565 (serine 565) is a Phosphoserine. Glycyl lysine isopeptide (Lys-Gly) (interchain with G-Cter in SUMO2) cross-links involve residues lysine 573, lysine 672, lysine 684, lysine 696, and lysine 706. 2 consecutive C2H2-type zinc fingers follow at residues leucine 722–histidine 744 and phenylalanine 750–histidine 772. The tract at residues serine 812 to aspartate 871 is disordered. Residues arginine 830–asparagine 854 are compositionally biased toward acidic residues.

Its subcellular location is the nucleus. Its function is as follows. May be involved in transcriptional regulation. This Homo sapiens (Human) protein is Zinc finger and BTB domain-containing protein 10 (ZBTB10).